Reading from the N-terminus, the 74-residue chain is MKLSNEQYDVAKNVVTVVVPAAIALITGLGALYQFDTTAITGTIALLATFAGTVLGVSSRNYQKEQEAQNNEVE.

2 helical membrane-spanning segments follow: residues 15–35 and 37–57; these read VTVVVPAAIALITGLGALYQF and TTAITGTIALLATFAGTVLGV.

Homomultimer.

Its subcellular location is the host cell inner membrane. In terms of biological role, accumulates harmlessly in the cytoplasmic membrane until it reaches a critical concentration that triggers the formation of micron-scale pores (holes) causing host cell membrane disruption and endolysin escape into the periplasmic space. Determines the precise timing of host cell lysis. Participates with the endolysin protein in the sequential events which lead to the programmed host cell lysis releasing the mature viral particles from the host cell. The chain is Holin (dph) from Streptococcus pneumoniae (Bacteriophage Dp-1).